Here is a 621-residue protein sequence, read N- to C-terminus: Putative acyltransferase plsB1 (621 aa).

Positions 123–128 (HRSYLD) match the HXXXXD motif motif.

It belongs to the GPAT/DAPAT family.

Its subcellular location is the cell membrane. The polypeptide is Putative acyltransferase plsB1 (plsB1) (Mycobacterium bovis (strain ATCC BAA-935 / AF2122/97)).